The sequence spans 212 residues: Octanoyltransferase (212 aa).

A BPL/LPL catalytic domain is found at Gly-34–Cys-208. Residues Arg-72–His-79, Ser-139–Gly-141, and Gly-152–Ser-154 each bind substrate. Catalysis depends on Cys-170, which acts as the Acyl-thioester intermediate.

It belongs to the LipB family.

It is found in the cytoplasm. The catalysed reaction is octanoyl-[ACP] + L-lysyl-[protein] = N(6)-octanoyl-L-lysyl-[protein] + holo-[ACP] + H(+). Its pathway is protein modification; protein lipoylation via endogenous pathway; protein N(6)-(lipoyl)lysine from octanoyl-[acyl-carrier-protein]: step 1/2. Its function is as follows. Catalyzes the transfer of endogenously produced octanoic acid from octanoyl-acyl-carrier-protein onto the lipoyl domains of lipoate-dependent enzymes. Lipoyl-ACP can also act as a substrate although octanoyl-ACP is likely to be the physiological substrate. The polypeptide is Octanoyltransferase (Magnetococcus marinus (strain ATCC BAA-1437 / JCM 17883 / MC-1)).